The chain runs to 464 residues: MTEKKNTERQLTSVQEEVIKGFTTGYGITPESQTDAAALRREFLDDQITMLTWADGDLSFYRDITKRPATSTVAKYDVYLAHGRVGHTRFTREIGVAPISDPNLRQKTVNMKYVSDTKNMSIATGLVNNIEDPMRILTDDAISVVAKTIEWASFYGDSDLSENPDAGSGLEFDGLAKLIDKHNVLDAKGASLTEALLNQASVLVGKGYGTPTDAYMPIGVQADFVNQQLDRQVQVISDNGQNATMGFNVKGFNSARGFIRLHGSTVMELEQILDENRMQLPNAPQKATVKATLEAGTKGKFRDEDLTIDTEYKVVVVSDDAESAPSDVASVVIDDKKKQVKLEITINNMYQARPQYVAIYRKGLETGLFYQIARVPASKAVEGVITFIDVNDEIPETADVFVGELTPSVVHLFELLPMMRLPLAQVNASVTFAVLWYGALALRAPKKWARIKNVKYIATGNVFN.

Positions 1-20 (MTEKKNTERQLTSVQEEVIK) are excised as a propeptide. The chain crosses the membrane as a helical span at residues 423–445 (LAQVNASVTFAVLWYGALALRAP).

The protein resides in the virion. It is found in the host membrane. The sequence is that of Putative major capsid protein from Enterococcus faecalis (Streptococcus faecalis).